A 284-amino-acid polypeptide reads, in one-letter code: D-tagatose-1,6-bisphosphate aldolase subunit GatY (284 aa).

Residue D82 is the Proton donor of the active site. H83 and H180 together coordinate Zn(2+). G181 serves as a coordination point for dihydroxyacetone phosphate. Residue H208 coordinates Zn(2+). Dihydroxyacetone phosphate is bound by residues 209–211 (GAS) and 230–233 (NVAT).

Belongs to the class II fructose-bisphosphate aldolase family. TagBP aldolase GatY subfamily. As to quaternary structure, forms a complex with GatZ. The cofactor is Zn(2+).

The enzyme catalyses D-tagatofuranose 1,6-bisphosphate = D-glyceraldehyde 3-phosphate + dihydroxyacetone phosphate. It participates in carbohydrate metabolism; D-tagatose 6-phosphate degradation; D-glyceraldehyde 3-phosphate and glycerone phosphate from D-tagatose 6-phosphate: step 2/2. Catalytic subunit of the tagatose-1,6-bisphosphate aldolase GatYZ, which catalyzes the reversible aldol condensation of dihydroxyacetone phosphate (DHAP or glycerone-phosphate) with glyceraldehyde 3-phosphate (G3P) to produce tagatose 1,6-bisphosphate (TBP). Requires GatZ subunit for full activity and stability. Is involved in the catabolism of galactitol. In Escherichia coli O8 (strain IAI1), this protein is D-tagatose-1,6-bisphosphate aldolase subunit GatY.